The primary structure comprises 101 residues: Signal recognition particle 19 kDa protein (101 aa).

The protein belongs to the SRP19 family. Part of the signal recognition particle protein translocation system, which is composed of SRP and FtsY. Archaeal SRP consists of a 7S RNA molecule of 300 nucleotides and two protein subunits: SRP54 and SRP19.

It localises to the cytoplasm. Functionally, involved in targeting and insertion of nascent membrane proteins into the cytoplasmic membrane. Binds directly to 7S RNA and mediates binding of the 54 kDa subunit of the SRP. The chain is Signal recognition particle 19 kDa protein from Methanosarcina mazei (strain ATCC BAA-159 / DSM 3647 / Goe1 / Go1 / JCM 11833 / OCM 88) (Methanosarcina frisia).